A 115-amino-acid polypeptide reads, in one-letter code: U31-theraphotoxin-Cg1a (115 aa).

Residues 1-18 (MKLCVIIIASLMVASVSG) form the signal peptide. Positions 19–51 (RLRKIKGTELDKKMLLEKLGHGMDIRFEETPRA) are excised as a propeptide. 4 disulfides stabilise this stretch: cysteine 52/cysteine 67, cysteine 60/cysteine 73, cysteine 64/cysteine 113, and cysteine 66/cysteine 86.

The protein belongs to the neurotoxin 03 (Tx2) family. 02 subfamily. As to expression, expressed by the venom gland.

It is found in the secreted. In terms of biological role, probable ion channel inhibitor. The sequence is that of U31-theraphotoxin-Cg1a from Chilobrachys guangxiensis (Chinese earth tiger tarantula).